The sequence spans 181 residues: Inner membrane-spanning protein YciB (181 aa).

The next 5 helical transmembrane spans lie at 10-30 (LIIF…GALI), 50-70 (MHLI…VFHD), 72-92 (AFIK…LGVS), 118-138 (VTWY…YVAF), and 148-168 (FKVF…VFYL).

Belongs to the YciB family.

It is found in the cell inner membrane. Plays a role in cell envelope biogenesis, maintenance of cell envelope integrity and membrane homeostasis. The protein is Inner membrane-spanning protein YciB of Shewanella sp. (strain ANA-3).